Reading from the N-terminus, the 364-residue chain is tRNA/tmRNA (uracil-C(5))-methyltransferase (364 aa).

5 residues coordinate S-adenosyl-L-methionine: Q189, Y216, N221, E237, and D297. C322 serves as the catalytic Nucleophile. E356 (proton acceptor) is an active-site residue.

The protein belongs to the class I-like SAM-binding methyltransferase superfamily. RNA M5U methyltransferase family. TrmA subfamily.

The catalysed reaction is uridine(54) in tRNA + S-adenosyl-L-methionine = 5-methyluridine(54) in tRNA + S-adenosyl-L-homocysteine + H(+). It catalyses the reaction uridine(341) in tmRNA + S-adenosyl-L-methionine = 5-methyluridine(341) in tmRNA + S-adenosyl-L-homocysteine + H(+). Functionally, dual-specificity methyltransferase that catalyzes the formation of 5-methyluridine at position 54 (m5U54) in all tRNAs, and that of position 341 (m5U341) in tmRNA (transfer-mRNA). The polypeptide is tRNA/tmRNA (uracil-C(5))-methyltransferase (Campylobacter curvus (strain 525.92)).